A 197-amino-acid polypeptide reads, in one-letter code: Histidine biosynthesis bifunctional protein HisIE (197 aa).

Residues 1–108 are phosphoribosyl-AMP cyclohydrolase; the sequence is MMTLYPVVVQ…RFEETGSPTF (108 aa). Residues 109-197 form a phosphoribosyl-ATP pyrophosphohydrolase region; it reads WLELYRLVRK…VMRELEKRRK (89 aa).

The protein in the N-terminal section; belongs to the PRA-CH family. In the C-terminal section; belongs to the PRA-PH family.

Its subcellular location is the cytoplasm. The catalysed reaction is 1-(5-phospho-beta-D-ribosyl)-ATP + H2O = 1-(5-phospho-beta-D-ribosyl)-5'-AMP + diphosphate + H(+). It carries out the reaction 1-(5-phospho-beta-D-ribosyl)-5'-AMP + H2O = 1-(5-phospho-beta-D-ribosyl)-5-[(5-phospho-beta-D-ribosylamino)methylideneamino]imidazole-4-carboxamide. Its pathway is amino-acid biosynthesis; L-histidine biosynthesis; L-histidine from 5-phospho-alpha-D-ribose 1-diphosphate: step 2/9. It participates in amino-acid biosynthesis; L-histidine biosynthesis; L-histidine from 5-phospho-alpha-D-ribose 1-diphosphate: step 3/9. The chain is Histidine biosynthesis bifunctional protein HisIE (hisI) from Thermotoga maritima (strain ATCC 43589 / DSM 3109 / JCM 10099 / NBRC 100826 / MSB8).